The primary structure comprises 382 residues: Anthranilate O-methyltransferase 1 (382 aa).

Position 20 (tyrosine 20) interacts with S-adenosyl-L-homocysteine. Anthranilate is bound at residue glutamine 27. The S-adenosyl-L-homocysteine site is built by cysteine 61, asparagine 66, aspartate 102, leucine 103, serine 146, and tyrosine 147. Tryptophan 168 is a binding site for anthranilate. 2 residues coordinate Mg(2+): glutamate 268 and phenylalanine 270.

This sequence belongs to the methyltransferase superfamily. Type-7 methyltransferase family. SABATH subfamily.

The catalysed reaction is anthranilate + S-adenosyl-L-methionine = O-methyl anthranilate + S-adenosyl-L-homocysteine. Functionally, methyltransferase involved in the biosynthesis of methyl anthranilate in response to stresses. Utilizes anthranilic acid as substrate, but not salicylic acid. Produces exclusively the O-methyl ester. The sequence is that of Anthranilate O-methyltransferase 1 (AAMT1) from Zea mays (Maize).